A 163-amino-acid polypeptide reads, in one-letter code: Nucleotide-binding protein SYNPCC7002_A1983 (163 aa).

It belongs to the YajQ family.

Functionally, nucleotide-binding protein. This Picosynechococcus sp. (strain ATCC 27264 / PCC 7002 / PR-6) (Agmenellum quadruplicatum) protein is Nucleotide-binding protein SYNPCC7002_A1983.